Here is a 1004-residue protein sequence, read N- to C-terminus: Unconventional myosin-Id (1004 aa).

A Myosin motor domain is found at 9–695 (FGKADFVLLD…TIFSLEEQRA (687 aa)). 102–109 (GESGAGKT) provides a ligand contact to ATP. The interval 572 to 594 (MISLVEKLASKEPYYVRCIKPND) is actin-binding. 2 consecutive IQ domains span residues 699–719 (KRIVLFLQKVWRGTLARMRYR) and 721–741 (MRAALIIIRAYRRYKVKSYIR). The region spanning 812–1003 (GQRADLGLQR…RSGYILSVPG (192 aa)) is the TH1 domain.

The protein belongs to the TRAFAC class myosin-kinesin ATPase superfamily. Myosin family. As to quaternary structure, interacts (via the two IQ motifs) with calmodulin. Interacts with F-actin.

Its subcellular location is the cytoplasm. It localises to the perikaryon. The protein localises to the cell projection. It is found in the dendrite. The protein resides in the early endosome. Its subcellular location is the cell cortex. Unconventional myosin that functions as actin-based motor protein with ATPase activity. Plays a role in the formation of Kupffer's vesicle, an organ that functions as a left-right organizer during embryogenesis. Plays a role in vesicular trafficking events that are required for normal lumen expansion of Kupffer's vesicle. Required for normal orientation of cilia in Kupffer's vesicle, and thus for normal, unidirectional circular flow and normal angular flow velocity, which then mediates asymmetric gene expression and left-right asymmetric development. Plays a role in endosomal protein trafficking, and especially in the transfer of cargo proteins from early to recycling endosomes. Required for normal planar cell polarity in ciliated cells, for normal rotational polarity of cilia, and for coordinated, unidirectional ciliary movement. The protein is Unconventional myosin-Id (myo1d) of Danio rerio (Zebrafish).